We begin with the raw amino-acid sequence, 161 residues long: Ubiquitin-conjugating enzyme E2Q-like protein 1 (161 aa).

The UBC core domain occupies Met-1–Val-154. Residue Cys-88 is the Glycyl thioester intermediate of the active site.

It belongs to the ubiquitin-conjugating enzyme family. Interacts with FBXW7.

It localises to the nucleus. The enzyme catalyses S-ubiquitinyl-[E1 ubiquitin-activating enzyme]-L-cysteine + [E2 ubiquitin-conjugating enzyme]-L-cysteine = [E1 ubiquitin-activating enzyme]-L-cysteine + S-ubiquitinyl-[E2 ubiquitin-conjugating enzyme]-L-cysteine.. It participates in protein modification; protein ubiquitination. In terms of biological role, probable E2 ubiquitin-protein ligase that catalyzes the covalent attachment of ubiquitin to target proteins. May facilitate the monoubiquitination and degradation of MTOR and CCNE1 through interaction with FBXW7. This Mus musculus (Mouse) protein is Ubiquitin-conjugating enzyme E2Q-like protein 1 (Ube2ql1).